Consider the following 556-residue polypeptide: Polypeptide N-acetylgalactosaminyltransferase 13 (556 aa).

Residues 1-4 are Cytoplasmic-facing; that stretch reads MRRL. The helical; Signal-anchor for type II membrane protein transmembrane segment at 5–27 threads the bilayer; it reads VYCKVVLATSLMWVLVDVFLLLY. Over 28-556 the chain is Lumenal; sequence FSECNKCDDK…WLLRNMTLGT (529 aa). N-linked (GlcNAc...) asparagine glycans are attached at residues Asn94 and Asn116. Disulfide bonds link Cys105/Cys338, Cys329/Cys407, Cys441/Cys458, Cys481/Cys496, and Cys522/Cys539. The segment at 114–224 is catalytic subdomain A; the sequence is LPNTSVVIVF…LGWLEPLLAR (111 aa). The substrate site is built by Asp155 and Arg185. Mn(2+) is bound by residues Asp208 and His210. Positions 284-346 are catalytic subdomain B; it reads PVRTPTMAGG…TCSHVGHVFR (63 aa). Trp315 provides a ligand contact to substrate. His343 contributes to the Mn(2+) binding site. Arg346 and Tyr351 together coordinate substrate. Positions 428–550 constitute a Ricin B-type lectin domain; that stretch reads YSLGEIRNVE…GSRSQQWLLR (123 aa). N-linked (GlcNAc...) asparagine glycosylation occurs at Asn551.

The protein belongs to the glycosyltransferase 2 family. GalNAc-T subfamily. Mn(2+) is required as a cofactor.

Its subcellular location is the golgi apparatus membrane. The catalysed reaction is L-seryl-[protein] + UDP-N-acetyl-alpha-D-galactosamine = a 3-O-[N-acetyl-alpha-D-galactosaminyl]-L-seryl-[protein] + UDP + H(+). It catalyses the reaction L-threonyl-[protein] + UDP-N-acetyl-alpha-D-galactosamine = a 3-O-[N-acetyl-alpha-D-galactosaminyl]-L-threonyl-[protein] + UDP + H(+). It functions in the pathway protein modification; protein glycosylation. Its function is as follows. Catalyzes the initial reaction in O-linked oligosaccharide biosynthesis, the transfer of an N-acetyl-D-galactosamine (GalNAc) residue from UDP-GalNAc to a serine or threonine residue on the protein receptor. Generates GalNAc-O-Ser/Thr structure also known as Tn antigen, which itself is immunogenic but also serves as a precursor for the synthesis of different mucin-type O-glycan core structures. Contributes to the synthesis of O-linked glycans on mucins and proteoglycans of the central nervous system. Can glycosylate both unmodified peptides and glycopeptides that already contain an O-linked GalNAc sugar. Transfers GalNAc to Thr-/Ser-rich tandem repeats GTTPSPVPTTSTTSAP of MUC5AC. Transfers GalNAc to three consecutive serine/threonine residues on SDC3 forming a triplet-Tn epitope expressed in Purkinje cells of the developing brain. May promote neurogenesis through glycosylation and stabilization of PDPN. This Rattus norvegicus (Rat) protein is Polypeptide N-acetylgalactosaminyltransferase 13 (Galnt13).